We begin with the raw amino-acid sequence, 461 residues long: Ribulose bisphosphate carboxylase (461 aa).

Asn-112 is a substrate binding site. The active-site Proton acceptor is the Lys-167. Lys-169 contacts substrate. Positions 192, 194, and 195 each coordinate Mg(2+). Lys-192 carries the post-translational modification N6-carboxylysine. The Proton acceptor role is filled by His-288. Residues Arg-289, His-322, and Ser-369 each coordinate substrate.

It belongs to the RuBisCO large chain family. Type II subfamily. Homodimer. Requires Mg(2+) as cofactor.

The catalysed reaction is 2 (2R)-3-phosphoglycerate + 2 H(+) = D-ribulose 1,5-bisphosphate + CO2 + H2O. It carries out the reaction D-ribulose 1,5-bisphosphate + O2 = 2-phosphoglycolate + (2R)-3-phosphoglycerate + 2 H(+). In terms of biological role, ruBisCO catalyzes two reactions: the carboxylation of D-ribulose 1,5-bisphosphate, the primary event in carbon dioxide fixation, as well as the oxidative fragmentation of the pentose substrate. Both reactions occur simultaneously and in competition at the same active site. The chain is Ribulose bisphosphate carboxylase from Rhodopseudomonas palustris (strain BisB5).